We begin with the raw amino-acid sequence, 579 residues long: General transcription and DNA repair factor IIH subunit TFB1-3 (579 aa).

BSD domains are found at residues 107 to 161 (LTPA…GKDS) and 186 to 238 (RTNR…YLYS).

Belongs to the TFB1 family. As to quaternary structure, component of the 7-subunit TFIIH core complex composed of XPB, XPD, TFB1/GTF2H1, GTF2H2/P44, TFB4/GTF2H3, TFB2/GTF2H4 and TFB5/GTF2H5, which is active in NER. The core complex associates with the 3-subunit CDK-activating kinase (CAK) module composed of CYCH1/cyclin H1, CDKD and MAT1/At4g30820 to form the 10-subunit holoenzyme (holo-TFIIH) active in transcription.

It is found in the nucleus. Component of the general transcription and DNA repair factor IIH (TFIIH) core complex, which is involved in general and transcription-coupled nucleotide excision repair (NER) of damaged DNA and, when complexed to CAK, in RNA transcription by RNA polymerase II. In NER, TFIIH acts by opening DNA around the lesion to allow the excision of the damaged oligonucleotide and its replacement by a new DNA fragment. In transcription, TFIIH has an essential role in transcription initiation. When the pre-initiation complex (PIC) has been established, TFIIH is required for promoter opening and promoter escape. Phosphorylation of the C-terminal tail (CTD) of the largest subunit of RNA polymerase II by the kinase module CAK controls the initiation of transcription. In Arabidopsis thaliana (Mouse-ear cress), this protein is General transcription and DNA repair factor IIH subunit TFB1-3.